Here is a 613-residue protein sequence, read N- to C-terminus: Dihydroxy-acid dehydratase (613 aa).

Asp81 is a Mg(2+) binding site. Cys122 lines the [2Fe-2S] cluster pocket. Residues Asp123 and Lys124 each coordinate Mg(2+). An N6-carboxylysine modification is found at Lys124. Cys193 is a binding site for [2Fe-2S] cluster. Glu489 serves as a coordination point for Mg(2+). Ser515 acts as the Proton acceptor in catalysis.

It belongs to the IlvD/Edd family. Homodimer. The cofactor is [2Fe-2S] cluster. Requires Mg(2+) as cofactor.

It catalyses the reaction (2R)-2,3-dihydroxy-3-methylbutanoate = 3-methyl-2-oxobutanoate + H2O. It carries out the reaction (2R,3R)-2,3-dihydroxy-3-methylpentanoate = (S)-3-methyl-2-oxopentanoate + H2O. The protein operates within amino-acid biosynthesis; L-isoleucine biosynthesis; L-isoleucine from 2-oxobutanoate: step 3/4. It participates in amino-acid biosynthesis; L-valine biosynthesis; L-valine from pyruvate: step 3/4. Functions in the biosynthesis of branched-chain amino acids. Catalyzes the dehydration of (2R,3R)-2,3-dihydroxy-3-methylpentanoate (2,3-dihydroxy-3-methylvalerate) into 2-oxo-3-methylpentanoate (2-oxo-3-methylvalerate) and of (2R)-2,3-dihydroxy-3-methylbutanoate (2,3-dihydroxyisovalerate) into 2-oxo-3-methylbutanoate (2-oxoisovalerate), the penultimate precursor to L-isoleucine and L-valine, respectively. The polypeptide is Dihydroxy-acid dehydratase (Pseudomonas putida (strain W619)).